The primary structure comprises 75 residues: Defensin-like protein (75 aa).

The signal sequence occupies residues 1–24 (MEKKSIAGLCFLFLVLFVAQEVVV). Intrachain disulfides connect cysteine 31–cysteine 75, cysteine 42–cysteine 63, cysteine 48–cysteine 69, and cysteine 52–cysteine 71.

This sequence belongs to the DEFL family.

Its subcellular location is the secreted. In terms of biological role, this protein is required for germination. The polypeptide is Defensin-like protein (Vigna unguiculata (Cowpea)).